The following is a 243-amino-acid chain: Ribonuclease 3 (243 aa).

Residues 10 to 146 (VNRFRKRFDT…FIGALYLDQG (137 aa)) enclose the RNase III domain. E59 lines the Mg(2+) pocket. D63 is an active-site residue. D132 and E135 together coordinate Mg(2+). The active site involves E135. In terms of domain architecture, DRBM spans 172-241 (DFKTQFQEYV…AESAYKQLKQ (70 aa)). Positions 219–231 (GKGKTKKESEQRA) are enriched in basic and acidic residues. A disordered region spans residues 219–243 (GKGKTKKESEQRAAESAYKQLKQIK).

Belongs to the ribonuclease III family. Homodimer. It depends on Mg(2+) as a cofactor.

The protein resides in the cytoplasm. It catalyses the reaction Endonucleolytic cleavage to 5'-phosphomonoester.. Its function is as follows. Digests double-stranded RNA. Involved in the processing of primary rRNA transcript to yield the immediate precursors to the large and small rRNAs (23S and 16S). Processes some mRNAs, and tRNAs when they are encoded in the rRNA operon. Processes pre-crRNA and tracrRNA of type II CRISPR loci if present in the organism. The protein is Ribonuclease 3 of Staphylococcus aureus (strain USA300).